The primary structure comprises 763 residues: Eukaryotic translation initiation factor 3 subunit B (763 aa).

The segment at 1–136 (MKNFLPRTLK…LFVECGSMND (136 aa)) is sufficient for interaction with HCR1 and TIF32. A sufficient for interaction with PIC8 region spans residues 28 to 261 (RNTQLKRSKI…GVTAWGGPNF (234 aa)). The residue at position 61 (Ser-61) is a Phosphoserine. Tyr-67 carries the phosphotyrosine modification. Residues 77-162 (QYIVVNGAPV…HRLFLYTMKD (86 aa)) form the RRM domain. WD repeat units follow at residues 228 to 266 (RENW…RLRR), 277 to 325 (VSPN…LMAT), 373 to 416 (LKPS…SACT), 484 to 524 (ELKD…IRFY), 544 to 589 (IPKT…EKNI), and 605 to 650 (PTYS…VKED). Residue Ser-669 is modified to Phosphoserine.

The protein belongs to the eIF-3 subunit B family. In terms of assembly, the eukaryotic translation initiation factor 3 (eIF-3) core complex is composed of TIF32, PRT1, NIP1, TIF34 and TIF35. A subcomplex of TIF32, NIP1 and PRT1 mediates the interaction with eIF-1, TIF5/eIF-5 and HCR1. The factors eIF-1, eIF-2, eIF-3, TIF5/eIF-5 and methionyl-tRNAi form a multifactor complex (MFC) that may bind to the 40S ribosome.

It is found in the cytoplasm. RNA-binding component of the eukaryotic translation initiation factor 3 (eIF-3) complex, which is involved in protein synthesis of a specialized repertoire of mRNAs and, together with other initiation factors, stimulates binding of mRNA and methionyl-tRNAi to the 40S ribosome. The eIF-3 complex specifically targets and initiates translation of a subset of mRNAs involved in cell proliferation. This is Eukaryotic translation initiation factor 3 subunit B from Saccharomyces cerevisiae (strain ATCC 204508 / S288c) (Baker's yeast).